The following is a 1222-amino-acid chain: PAN2-PAN3 deadenylation complex catalytic subunit PAN2 (1222 aa).

WD repeat units lie at residues 104–143 and 276–315; these read PEMT…IVDQ and ANVA…HFNE. The tract at residues 316 to 451 is linker; it reads IGKETEFSDI…GLKINGETKE (136 aa). One can recognise a USP domain in the interval 452–821; sequence DPLLKYSNVE…SPCTLAYQIS (370 aa). The region spanning 871–1027 is the Exonuclease domain; that stretch reads ALDTEFVDLE…WAVFKEYIQE (157 aa). Positions 873, 875, and 982 each coordinate a divalent metal cation. The disordered stretch occupies residues 1035 to 1067; the sequence is TSITTTTNPNIHDANTSTTTTTAITTTPPEGHD. Low complexity predominate over residues 1050–1061; the sequence is TSTTTTTAITTT. Asp1071 serves as a coordination point for a divalent metal cation. 2 disordered regions span residues 1110–1152 and 1167–1222; these read PARY…LSGR and ASVT…SPMR. The span at 1119 to 1133 shows a compositional bias: low complexity; sequence PNPNNNNINNGVNPN. The span at 1134-1144 shows a compositional bias: polar residues; it reads GLSTPGSTNPI. Residues 1180-1191 show a composition bias toward low complexity; the sequence is NGSMSGSTPSTP. A compositionally biased stretch (gly residues) spans 1207–1216; it reads SFGGAKGLTF.

This sequence belongs to the peptidase C19 family. PAN2 subfamily. Forms a heterotrimer with an asymmetric homodimer of the regulatory subunit PAN3 to form the poly(A)-nuclease (PAN) deadenylation complex. Requires a divalent metal cation as cofactor.

The protein resides in the cytoplasm. It carries out the reaction Exonucleolytic cleavage of poly(A) to 5'-AMP.. Positively regulated by the regulatory subunit PAN3. Catalytic subunit of the poly(A)-nuclease (PAN) deadenylation complex, one of two cytoplasmic mRNA deadenylases involved in mRNA turnover. PAN specifically shortens poly(A) tails of RNA and the activity is stimulated by poly(A)-binding protein PAB1. PAN deadenylation is followed by rapid degradation of the shortened mRNA tails by the CCR4-NOT complex. Deadenylated mRNAs are then degraded by two alternative mechanisms, namely exosome-mediated 3'-5' exonucleolytic degradation, or deadenylation-dependent mRNA decaping and subsequent 5'-3' exonucleolytic degradation by XRN1. May also be involved in post-transcriptional maturation of mRNA poly(A) tails. This is PAN2-PAN3 deadenylation complex catalytic subunit PAN2 from Coccidioides immitis (strain RS) (Valley fever fungus).